A 448-amino-acid polypeptide reads, in one-letter code: Adenylosuccinate synthetase (448 aa).

GTP is bound by residues 36 to 42 (GDEGKGK) and 64 to 66 (GHT). The active-site Proton acceptor is the D37. The Mg(2+) site is built by D37 and G64. IMP-binding positions include 37–40 (DEGK), 62–65 (NAGH), T154, R168, N246, T261, and R325. H65 functions as the Proton donor in the catalytic mechanism. 321-327 (VTTKRKR) contacts substrate. Residues R327, 353 to 355 (KLD), and 436 to 438 (GVG) each bind GTP.

This sequence belongs to the adenylosuccinate synthetase family. As to quaternary structure, homodimer. It depends on Mg(2+) as a cofactor.

It is found in the cytoplasm. It catalyses the reaction IMP + L-aspartate + GTP = N(6)-(1,2-dicarboxyethyl)-AMP + GDP + phosphate + 2 H(+). It participates in purine metabolism; AMP biosynthesis via de novo pathway; AMP from IMP: step 1/2. Plays an important role in the de novo pathway and in the salvage pathway of purine nucleotide biosynthesis. Catalyzes the first committed step in the biosynthesis of AMP from IMP. This Drosophila ananassae (Fruit fly) protein is Adenylosuccinate synthetase.